A 959-amino-acid chain; its full sequence is Probable LRR receptor-like serine/threonine-protein kinase At5g37450 (959 aa).

An N-terminal signal peptide occupies residues 1-24 (MKEMMGVVGIILVVSSCCLSLLDA). Residues 25 to 565 (QEITHPTDVS…SGMSIGVSVG (541 aa)) lie on the Extracellular side of the membrane. N-linked (GlcNAc...) asparagine glycans are attached at residues asparagine 62, asparagine 88, asparagine 102, and asparagine 123. LRR repeat units follow at residues 79-100 (VKEL…LGLL), 101-124 (SNLT…LGNL), 125-148 (THLI…LGSL), 149-172 (SNLL…LANL), 173-198 (KKLK…TLTN), 200-220 (LHFL…LAQM), 221-244 (PSLR…SYGS), 246-268 (PNLV…LSKS), and 269-292 (LVLY…KFSA). An N-linked (GlcNAc...) asparagine glycan is attached at asparagine 182. 6 N-linked (GlcNAc...) asparagine glycosylation sites follow: asparagine 293, asparagine 311, asparagine 327, asparagine 358, asparagine 369, and asparagine 510. LRR repeat units follow at residues 294–314 (ITTI…NFSG), 315–338 (LPRL…IWEN), and 341–366 (LKAE…LLNP). Residues 566 to 586 (IIIGAIAFFLVLSSLALVFFI) traverse the membrane as a helical segment. The Cytoplasmic segment spans residues 587-959 (KRSKRKRKTR…SGVIPSIAPR (373 aa)). A Protein kinase domain is found at 631–906 (FSDLSQIGRG…RELENIYGLI (276 aa)). ATP-binding positions include 637 to 645 (IGRGGYGKV) and lysine 659. Aspartate 755 (proton acceptor) is an active-site residue.

It belongs to the protein kinase superfamily. Ser/Thr protein kinase family.

Its subcellular location is the membrane. The enzyme catalyses L-seryl-[protein] + ATP = O-phospho-L-seryl-[protein] + ADP + H(+). It catalyses the reaction L-threonyl-[protein] + ATP = O-phospho-L-threonyl-[protein] + ADP + H(+). The chain is Probable LRR receptor-like serine/threonine-protein kinase At5g37450 from Arabidopsis thaliana (Mouse-ear cress).